A 184-amino-acid polypeptide reads, in one-letter code: ATP synthase subunit b, chloroplastic (184 aa).

The helical transmembrane segment at Leu-27–Leu-49 threads the bilayer.

This sequence belongs to the ATPase B chain family. As to quaternary structure, F-type ATPases have 2 components, F(1) - the catalytic core - and F(0) - the membrane proton channel. F(1) has five subunits: alpha(3), beta(3), gamma(1), delta(1), epsilon(1). F(0) has four main subunits: a(1), b(1), b'(1) and c(10-14). The alpha and beta chains form an alternating ring which encloses part of the gamma chain. F(1) is attached to F(0) by a central stalk formed by the gamma and epsilon chains, while a peripheral stalk is formed by the delta, b and b' chains.

It is found in the plastid. The protein localises to the chloroplast thylakoid membrane. In terms of biological role, f(1)F(0) ATP synthase produces ATP from ADP in the presence of a proton or sodium gradient. F-type ATPases consist of two structural domains, F(1) containing the extramembraneous catalytic core and F(0) containing the membrane proton channel, linked together by a central stalk and a peripheral stalk. During catalysis, ATP synthesis in the catalytic domain of F(1) is coupled via a rotary mechanism of the central stalk subunits to proton translocation. Component of the F(0) channel, it forms part of the peripheral stalk, linking F(1) to F(0). In Chloranthus spicatus (Chulantree), this protein is ATP synthase subunit b, chloroplastic.